The following is a 283-amino-acid chain: Lipoyl synthase (283 aa).

Cysteine 35, cysteine 40, cysteine 46, cysteine 61, cysteine 65, cysteine 68, and serine 273 together coordinate [4Fe-4S] cluster. Residues 47–262 enclose the Radical SAM core domain; that stretch reads FRERQATFLI…RAAALATGFA (216 aa).

Belongs to the radical SAM superfamily. Lipoyl synthase family. [4Fe-4S] cluster serves as cofactor.

The protein localises to the cytoplasm. The enzyme catalyses [[Fe-S] cluster scaffold protein carrying a second [4Fe-4S](2+) cluster] + N(6)-octanoyl-L-lysyl-[protein] + 2 oxidized [2Fe-2S]-[ferredoxin] + 2 S-adenosyl-L-methionine + 4 H(+) = [[Fe-S] cluster scaffold protein] + N(6)-[(R)-dihydrolipoyl]-L-lysyl-[protein] + 4 Fe(3+) + 2 hydrogen sulfide + 2 5'-deoxyadenosine + 2 L-methionine + 2 reduced [2Fe-2S]-[ferredoxin]. The protein operates within protein modification; protein lipoylation via endogenous pathway; protein N(6)-(lipoyl)lysine from octanoyl-[acyl-carrier-protein]: step 2/2. Its function is as follows. Catalyzes the radical-mediated insertion of two sulfur atoms into the C-6 and C-8 positions of the octanoyl moiety bound to the lipoyl domains of lipoate-dependent enzymes, thereby converting the octanoylated domains into lipoylated derivatives. The protein is Lipoyl synthase of Geobacter metallireducens (strain ATCC 53774 / DSM 7210 / GS-15).